A 192-amino-acid chain; its full sequence is U1 small nuclear ribonucleoprotein C (192 aa).

The segment at 4–36 (YYCEYCDIYLTHSSPVGRRQHNQGRKHISAKIE) adopts a Matrin-type zinc-finger fold. Residues 118 to 192 (PGANKYPNNN…FVNKNSEQPN (75 aa)) are disordered. The segment covering 133–154 (RISNTPKPYNNYTNKPITNSPY) has biased composition (polar residues). Over residues 164–173 (NNENSNNFSN) the composition is skewed to low complexity. The span at 174–192 (YQMNKDNSNFVNKNSEQPN) shows a compositional bias: polar residues.

This sequence belongs to the U1 small nuclear ribonucleoprotein C family. U1 snRNP is composed of the 7 core Sm proteins B/B', D1, D2, D3, E, F and G that assemble in a heptameric protein ring on the Sm site of the small nuclear RNA to form the core snRNP, and at least 3 U1 snRNP-specific proteins U1-70K, U1-A and U1-C. U1-C interacts with U1 snRNA and the 5' splice-site region of the pre-mRNA.

The protein resides in the nucleus. Functionally, component of the spliceosomal U1 snRNP, which is essential for recognition of the pre-mRNA 5' splice-site and the subsequent assembly of the spliceosome. U1-C is directly involved in initial 5' splice-site recognition for both constitutive and regulated alternative splicing. The interaction with the 5' splice-site seems to precede base-pairing between the pre-mRNA and the U1 snRNA. Stimulates commitment or early (E) complex formation by stabilizing the base pairing of the 5' end of the U1 snRNA and the 5' splice-site region. This Plasmodium chabaudi chabaudi protein is U1 small nuclear ribonucleoprotein C.